A 109-amino-acid chain; its full sequence is Spermidine export protein MdtI (109 aa).

4 consecutive transmembrane segments (helical) span residues Trp6 to Leu26, Ile36 to Val56, Ala64 to Phe84, and Leu88 to Leu108.

This sequence belongs to the drug/metabolite transporter (DMT) superfamily. Small multidrug resistance (SMR) (TC 2.A.7.1) family. MdtI subfamily. In terms of assembly, forms a complex with MdtJ.

Its subcellular location is the cell inner membrane. In terms of biological role, catalyzes the excretion of spermidine. This chain is Spermidine export protein MdtI, found in Shigella dysenteriae serotype 1 (strain Sd197).